The sequence spans 488 residues: Glutamyl-tRNA(Gln) amidotransferase subunit A (488 aa).

Active-site charge relay system residues include Lys-77 and Ser-152. Ser-176 serves as the catalytic Acyl-ester intermediate.

The protein belongs to the amidase family. GatA subfamily. Heterotrimer of A, B and C subunits.

The enzyme catalyses L-glutamyl-tRNA(Gln) + L-glutamine + ATP + H2O = L-glutaminyl-tRNA(Gln) + L-glutamate + ADP + phosphate + H(+). Functionally, allows the formation of correctly charged Gln-tRNA(Gln) through the transamidation of misacylated Glu-tRNA(Gln) in organisms which lack glutaminyl-tRNA synthetase. The reaction takes place in the presence of glutamine and ATP through an activated gamma-phospho-Glu-tRNA(Gln). The polypeptide is Glutamyl-tRNA(Gln) amidotransferase subunit A (Streptococcus sanguinis (strain SK36)).